We begin with the raw amino-acid sequence, 427 residues long: MASFNVPIIMDNGTGYSKLGYAGNDAPSYVFPTVIATRSAGASSGPAVSSKPSYMASKGSGHLSSKRATEDLDFFIGNDALKKASAGYSLDYPIRHGQIENWDHMERFWQQSLFKYLRCEPEDHYFLLTEPPLNPPENRENTAEIMFESFNCAGLYIAVQAVLALAASWTSSKVTDRSLTGTVVDSGDGVTHIIPVAEGYVIGSSIKTMPLAGRDVTYFVQSLLRDRNEPDSSLKTAERIKEECCYVCPDIVKEFSRFDREPDRYLKYASESITGHSTTIDVGFERFLAPEIFFNPEIASSDFLTPLPELVDNVVQSSPIDVRKGLYKNIVLSGGSTLFKNFGNRLQRDLKRIVDERIHRSEMLSGAKSGGVDVNVISHKRQRNAVWFGGSLLAQTPEFGSYCHTKADYEEYGASIARRYQIFGNSL.

The protein belongs to the actin family. ARP3 subfamily. Component of the Arp2/3 complex composed of arp2, act2, arc1/p41-ARC, arc2/p34-ARC, arc3/p21-ARC, arc4/p20-ARC and arc5/p16-ARC.

It localises to the cytoplasm. The protein resides in the cytoskeleton. It is found in the actin patch. In terms of biological role, functions as ATP-binding component of the Arp2/3 complex which is involved in regulation of actin polymerization and together with an activating nucleation-promoting factor (NPF) mediates the formation of branched actin networks. Seems to contact the pointed end of the daughter actin filament. May be involved in cytokinesis. This Schizosaccharomyces pombe (strain 972 / ATCC 24843) (Fission yeast) protein is Actin-related protein 3 (act2).